A 2122-amino-acid chain; its full sequence is Pecanex-like protein 2 (2122 aa).

2 helical membrane-spanning segments follow: residues Leu-36–Phe-53 and Ala-60–His-82. Disordered stretches follow at residues Gln-92–Ala-164 and Gln-180–Pro-250. 2 stretches are compositionally biased toward polar residues: residues Ser-146–Ser-157 and Ala-185–Arg-203. N-linked (GlcNAc...) asparagine glycosylation is present at Asn-288. Low complexity-rich tracts occupy residues Val-392–Ala-407 and Pro-458–Thr-476. 2 disordered regions span residues Val-392 to Asn-556 and Val-575 to Thr-634. The segment covering Ser-528–Lys-538 has biased composition (basic and acidic residues). Asn-556 is a glycosylation site (N-linked (GlcNAc...) asparagine). Basic and acidic residues predominate over residues Thr-599–Lys-618. The span at Asp-625–Thr-634 shows a compositional bias: polar residues. 13 helical membrane passes run Val-825–Phe-845, Leu-849–Val-869, Gln-882–Leu-902, His-933–Ile-953, Gly-976–Cys-998, His-1010–Ser-1030, Leu-1080–Leu-1100, Phe-1105–Leu-1125, Tyr-1174–Asn-1194, Ser-1218–Phe-1238, Glu-1245–Leu-1265, Phe-1270–Ala-1290, and Thr-1305–Ile-1325. 3 N-linked (GlcNAc...) asparagine glycosylation sites follow: Asn-1393, Asn-1534, and Asn-1802. Disordered regions lie at residues Ser-1858–Pro-1943 and Ser-1955–His-1991. A compositionally biased stretch (basic and acidic residues) spans Glu-1888–Arg-1898. Over residues Ser-1922–Gly-1942 the composition is skewed to polar residues. Residues Ser-1968–Ser-1981 are compositionally biased toward low complexity. The N-linked (GlcNAc...) asparagine glycan is linked to Asn-2039. The segment at Val-2097–Gln-2122 is disordered. A compositionally biased stretch (polar residues) spans Thr-2112–Gln-2122.

It belongs to the pecanex family.

It is found in the membrane. May play a role in tumorigenesis. This is Pecanex-like protein 2 from Mus musculus (Mouse).